Reading from the N-terminus, the 439-residue chain is GTPase Der (439 aa).

EngA-type G domains are found at residues 4–169 (AMVS…PQEE) and 177–352 (IKIA…EEYN). GTP is bound by residues 10–17 (GRPNVGKS), 57–61 (DTGGL), 120–123 (NKVD), 183–190 (GKPNVGKS), 230–234 (DTAGI), and 295–298 (NKWD). The KH-like domain occupies 353-437 (KRITTGLLNN…PIVISTKKRG (85 aa)).

It belongs to the TRAFAC class TrmE-Era-EngA-EngB-Septin-like GTPase superfamily. EngA (Der) GTPase family. In terms of assembly, associates with the 50S ribosomal subunit.

GTPase that plays an essential role in the late steps of ribosome biogenesis. The chain is GTPase Der from Thermoanaerobacter sp. (strain X514).